Reading from the N-terminus, the 741-residue chain is MSQLLEPSAETIKAERLYREMGLTDDEFALAEKIVGRPLNFTETGLFSVMWSEHCSYKNSKVLLKKFPTDGENVLQGPGEGAGIIDIKDEQAVVFKIESHNHPSAIEPYQGAATGVGGILRDVFSMGARPVALLNSLRFGELESKKVKYLFEEVVAGIAGYGNCVGVPTVGGEVQFDPCYESNPLVNAMCVGLIDHKDIQKGQAKGVGNTVMYVGASTGRDGIHGATFASEELSEDSDAKRPAVQVGDPFMEKLLLEACLEVVQSDALIGIQDMGAAGLVSSSAEMASKAGSGIEMNLDLVPQREAGMTPYEMMLSESQERMLLVVEKGREHEIKATFERWNLHAVEVGVVTDDRRLRLTHKGEIVADVPVDALAEDAPVYHKPSKVPAYFDAFQQQAPYIPEITEANETLLKLLAQPTIASKEWVYEQYDYMVQTNTVVEPGSDAAVIRIRGTNKALAMTTDCNSRYLYVDPEMGGKIAIAEAARNLVCSGAKPLGVTDCLNYGNPEKPEIFWQLEKSTDGLSEACRELGTPVIGGNVSLYNERSGGAVYPTPVIGMVGLVEDVAHITTQSFKNAGDLIYVIGETKAEFGGSELQKMLVGELSGKAPEIDLAVEKSRQQQLLSAIKQGLVQSAHDVAEGGLAVSLAEKMMECPFGAEVSLSLSAAELFAESQSRFIVTVKPSDQQRFENTVLDAVVVGAVTESRKLTIRNENGNAVIDLCQDELVKAWKGAIPCLLKSKA.

Residue histidine 54 is part of the active site. Tyrosine 57 and lysine 96 together coordinate ATP. Glutamate 98 is a binding site for Mg(2+). Substrate-binding positions include 99–102 (SHNH) and arginine 121. Histidine 100 functions as the Proton acceptor in the catalytic mechanism. Aspartate 122 is a binding site for Mg(2+). A substrate-binding site is contributed by glutamine 245. Residue aspartate 273 participates in Mg(2+) binding. 317–319 (ESQ) lines the substrate pocket. Residues aspartate 500 and glycine 537 each coordinate ATP. Asparagine 538 provides a ligand contact to Mg(2+). Serine 540 is a binding site for substrate.

This sequence belongs to the FGAMS family. Monomer. Part of the FGAM synthase complex composed of 1 PurL, 1 PurQ and 2 PurS subunits.

It is found in the cytoplasm. It carries out the reaction N(2)-formyl-N(1)-(5-phospho-beta-D-ribosyl)glycinamide + L-glutamine + ATP + H2O = 2-formamido-N(1)-(5-O-phospho-beta-D-ribosyl)acetamidine + L-glutamate + ADP + phosphate + H(+). Its pathway is purine metabolism; IMP biosynthesis via de novo pathway; 5-amino-1-(5-phospho-D-ribosyl)imidazole from N(2)-formyl-N(1)-(5-phospho-D-ribosyl)glycinamide: step 1/2. In terms of biological role, part of the phosphoribosylformylglycinamidine synthase complex involved in the purines biosynthetic pathway. Catalyzes the ATP-dependent conversion of formylglycinamide ribonucleotide (FGAR) and glutamine to yield formylglycinamidine ribonucleotide (FGAM) and glutamate. The FGAM synthase complex is composed of three subunits. PurQ produces an ammonia molecule by converting glutamine to glutamate. PurL transfers the ammonia molecule to FGAR to form FGAM in an ATP-dependent manner. PurS interacts with PurQ and PurL and is thought to assist in the transfer of the ammonia molecule from PurQ to PurL. In Shouchella clausii (strain KSM-K16) (Alkalihalobacillus clausii), this protein is Phosphoribosylformylglycinamidine synthase subunit PurL.